Consider the following 242-residue polypeptide: Ribosomal RNA small subunit methyltransferase G (242 aa).

S-adenosyl-L-methionine contacts are provided by residues glycine 78, phenylalanine 83, 129–130 (AE), and arginine 148. The interval 221-242 (TKKRYPRKAGVPEKSPIGGKHD) is disordered.

The protein belongs to the methyltransferase superfamily. RNA methyltransferase RsmG family.

It is found in the cytoplasm. Specifically methylates the N7 position of a guanine in 16S rRNA. This Oenococcus oeni (strain ATCC BAA-331 / PSU-1) protein is Ribosomal RNA small subunit methyltransferase G.